Here is a 194-residue protein sequence, read N- to C-terminus: dCTP deaminase (194 aa).

DCTP is bound by residues 110 to 115 (RSSLAR), Asp128, 136 to 138 (VLE), Tyr171, Lys178, and Gln182. Catalysis depends on Glu138, which acts as the Proton donor/acceptor.

The protein belongs to the dCTP deaminase family. In terms of assembly, homotrimer.

It carries out the reaction dCTP + H2O + H(+) = dUTP + NH4(+). Its pathway is pyrimidine metabolism; dUMP biosynthesis; dUMP from dCTP (dUTP route): step 1/2. Functionally, catalyzes the deamination of dCTP to dUTP. The sequence is that of dCTP deaminase from Mannheimia succiniciproducens (strain KCTC 0769BP / MBEL55E).